Consider the following 440-residue polypeptide: MGREPFNLKNLEMRIINNKKDAIQELKRISSRTNSENNNKINLIVEEILQEVKTYGDIAVEKYTKKFDGFNPDPMQISEDHLKDAWDEIDSNLKRSLEVAHKRIKKFHEKEIPQSFTIKGEHGDTVQRRWRPVKNAGIYIPGGRAAYPSTVLMNAIPAKVAGVEEIIMVSPGNKEGEINKTVLAAAHLSGIKKVFRIGGAQAIGALAFGTNQINKVDVITGPGNIYVTTAKKLIYGSTGIDSLAGPSEILVIADETAQSTHIASDLLAQAEHDPLASSILLTTSKNQAKEVLEELYKKIDDHPRKEICMQSIKNWGLIVICENYELCIELSNNFAPEHLEILALDSKKILEGIENAGAIFLGKWTPEAVGDYLAGPNHTLPTSGNSRFSGSLGVETFMKNTSIIEFNEESLKVNSLDIINLAESEGLHSHANSVKIRFED.

NAD(+)-binding residues include tyrosine 139, glutamine 201, and asparagine 224. Serine 247, glutamine 269, and histidine 272 together coordinate substrate. Zn(2+) is bound by residues glutamine 269 and histidine 272. Active-site proton acceptor residues include glutamate 337 and histidine 338. Positions 338, 371, 425, and 430 each coordinate substrate. Aspartate 371 contributes to the Zn(2+) binding site. Histidine 430 serves as a coordination point for Zn(2+).

The protein belongs to the histidinol dehydrogenase family. Zn(2+) is required as a cofactor.

It catalyses the reaction L-histidinol + 2 NAD(+) + H2O = L-histidine + 2 NADH + 3 H(+). The protein operates within amino-acid biosynthesis; L-histidine biosynthesis; L-histidine from 5-phospho-alpha-D-ribose 1-diphosphate: step 9/9. Functionally, catalyzes the sequential NAD-dependent oxidations of L-histidinol to L-histidinaldehyde and then to L-histidine. The chain is Histidinol dehydrogenase from Prochlorococcus marinus (strain MIT 9312).